The primary structure comprises 450 residues: Glucose-6-phosphate isomerase (450 aa).

Thr-39 bears the Phosphothreonine mark. Glu-291 (proton donor) is an active-site residue. Residues His-312 and Lys-426 contribute to the active site.

The protein belongs to the GPI family.

Its subcellular location is the cytoplasm. The enzyme catalyses alpha-D-glucose 6-phosphate = beta-D-fructose 6-phosphate. It participates in carbohydrate biosynthesis; gluconeogenesis. It functions in the pathway carbohydrate degradation; glycolysis; D-glyceraldehyde 3-phosphate and glycerone phosphate from D-glucose: step 2/4. In terms of biological role, catalyzes the reversible isomerization of glucose-6-phosphate to fructose-6-phosphate. The sequence is that of Glucose-6-phosphate isomerase from Bacillus cereus (strain AH187).